The chain runs to 404 residues: MPRLPGRGGPLMLFDSARRGTAASAPTGTGTMYVCGITPYDATHLGHAATMITFDLIQRVWRDAGLDVTYVQNVTDIDDPLLERAARDGEDWKVLAMRETALFREDMEALRIIPPEHYVGAVESIPDIAERVLMLVKEGAAYRLEDGTGDVYFDISATPRFGYESHLSREQMLEIFPERGGDPDRAGKRDPLDPLLWRGARADEPSWPGGDLGPGRPGWHIECAVIALNLLGAQIDVQGGGNDLIFPHHECSAAHAELLTGQTPFARHYVHAGMIGLDGEKMSKSRGNLVFVSRLRADQVDPMAVRLALMSGHYHSDRSWNDELLATAQKRLGRWRKAAAMPCGPSAEAFLAALRGRLADDLDSPGALAAADSWAEAALVGVGDDPAAPTLFTRALDALLGVRL.

Cys-35 is a binding site for Zn(2+). L-cysteinyl-5'-AMP-binding positions include 35-38, Thr-50, and 73-75; these read CGIT and NVT. Positions 37 to 47 match the 'HIGH' region motif; it reads ITPYDATHLGH. Positions 178 to 183 match the 'ERGGDP' region motif; the sequence is ERGGDP. Trp-219 contacts L-cysteinyl-5'-AMP. A Zn(2+)-binding site is contributed by Cys-223. 241–243 contacts L-cysteinyl-5'-AMP; it reads GND. Residue His-248 coordinates Zn(2+). L-cysteinyl-5'-AMP is bound at residue Ile-275. The short motif at 281-285 is the 'KMSKS' region element; the sequence is KMSKS.

Belongs to the class-I aminoacyl-tRNA synthetase family. MshC subfamily. In terms of assembly, monomer. Zn(2+) is required as a cofactor.

The enzyme catalyses 1D-myo-inositol 2-amino-2-deoxy-alpha-D-glucopyranoside + L-cysteine + ATP = 1D-myo-inositol 2-(L-cysteinylamino)-2-deoxy-alpha-D-glucopyranoside + AMP + diphosphate + H(+). In terms of biological role, catalyzes the ATP-dependent condensation of GlcN-Ins and L-cysteine to form L-Cys-GlcN-Ins. The chain is L-cysteine:1D-myo-inositol 2-amino-2-deoxy-alpha-D-glucopyranoside ligase from Salinispora tropica (strain ATCC BAA-916 / DSM 44818 / JCM 13857 / NBRC 105044 / CNB-440).